Reading from the N-terminus, the 633-residue chain is Phosphomethylpyrimidine synthase (633 aa).

Residues N245, M274, Y303, H339, 359 to 361 (SRG), 400 to 403 (DGLR), and E439 contribute to the substrate site. Residue H443 coordinates Zn(2+). Residue Y466 coordinates substrate. H507 contributes to the Zn(2+) binding site. [4Fe-4S] cluster contacts are provided by C587, C590, and C595.

The protein belongs to the ThiC family. Homodimer. The cofactor is [4Fe-4S] cluster.

It carries out the reaction 5-amino-1-(5-phospho-beta-D-ribosyl)imidazole + S-adenosyl-L-methionine = 4-amino-2-methyl-5-(phosphooxymethyl)pyrimidine + CO + 5'-deoxyadenosine + formate + L-methionine + 3 H(+). It participates in cofactor biosynthesis; thiamine diphosphate biosynthesis. Functionally, catalyzes the synthesis of the hydroxymethylpyrimidine phosphate (HMP-P) moiety of thiamine from aminoimidazole ribotide (AIR) in a radical S-adenosyl-L-methionine (SAM)-dependent reaction. This Neisseria meningitidis serogroup B (strain ATCC BAA-335 / MC58) protein is Phosphomethylpyrimidine synthase.